A 397-amino-acid polypeptide reads, in one-letter code: MDLHSILQPISTPSASVVTAPLPATIALPSPNYYYPPVAQGHYPVNNMWSLPSNVRVISSHGAPGHQTSASQPSTVMPALETNASNAQYYPAYSVINGNNSVQVASPAYTVSHSPHSFSNPRYVAVPQKSTSPNQVCSYCEPLPNHLTKTKSCSIPPILNSSDRSPLSLPTPYPVQYSTQPVSLPQPIAAPAPPSAESSKSTISDEDVAWQLIRLGALSSNSVKSSPSKSFVSISSPVQSTVKPTKASGVVKSEKVEKRSLPPQDFGNASSSTSAKRRRPDHNHTSTLDASSSNTSLASTGPMTVSSSTVERKGKEASEVNPNSTSSVTFSDFAAAISRSRCSRCKKSKKGCDRQRPCGRCRDAGLNSEDCISDDDMPVSNARKPRGRGRGRPKTKN.

Disordered stretches follow at residues 159 to 203 (LNSS…KSTI) and 221 to 397 (NSVK…KTKN). Residues 221–240 (NSVKSSPSKSFVSISSPVQS) are compositionally biased toward low complexity. Composition is skewed to polar residues over residues 285 to 309 (TSTLDASSSNTSLASTGPMTVSSST) and 320 to 330 (VNPNSTSSVTF). The zn(2)-C6 fungal-type DNA-binding region spans 342–371 (CSRCKKSKKGCDRQRPCGRCRDAGLNSEDC). The segment covering 350 to 363 (KGCDRQRPCGRCRD) has biased composition (basic and acidic residues). Over residues 383–397 (RKPRGRGRGRPKTKN) the composition is skewed to basic residues.

The protein localises to the nucleus. This is an uncharacterized protein from Schizosaccharomyces pombe (strain 972 / ATCC 24843) (Fission yeast).